Reading from the N-terminus, the 176-residue chain is MSFNTEVQPGICMEPDAITQEYVFNHTMLRVKDPKRSLDFYSRVLGMRLLRRLDFEEGRFSLYFLAMTRGEEVPDAVDERQRYTFGRQSVLELTHNWGSESDDSQYHNGNQDPRGFGHICFSVPDLVAACERFETLGVNFVKPLDRGMKNVAFISDPDGYWVEIVQASLNGEMGRG.

Residues 23–167 (VFNHTMLRVK…DGYWVEIVQA (145 aa)) enclose the VOC domain. Position 26 (His-26) interacts with Ni(2+). Arg-30 is a binding site for substrate. Position 92 (Glu-92) interacts with Ni(2+). Positions 96, 114, and 118 each coordinate substrate. Ni(2+) is bound by residues His-118 and Glu-163. Glu-163 (proton donor/acceptor) is an active-site residue.

This sequence belongs to the glyoxalase I family. Monomer. The cofactor is Ni(2+). Zn(2+) serves as cofactor.

It catalyses the reaction (R)-S-lactoylglutathione = methylglyoxal + glutathione. It participates in secondary metabolite metabolism; methylglyoxal degradation; (R)-lactate from methylglyoxal: step 1/2. In terms of biological role, catalyzes the conversion of hemimercaptal, formed from methylglyoxal and glutathione, to S-lactoylglutathione. The sequence is that of Lactoylglutathione lyase (gloA) from Pseudomonas aeruginosa (strain ATCC 15692 / DSM 22644 / CIP 104116 / JCM 14847 / LMG 12228 / 1C / PRS 101 / PAO1).